Reading from the N-terminus, the 119-residue chain is Large ribosomal subunit protein uL18 (119 aa).

The tract at residues methionine 1–glutamine 22 is disordered. Residues alanine 8–alanine 19 are compositionally biased toward basic residues.

It belongs to the universal ribosomal protein uL18 family. Part of the 50S ribosomal subunit; part of the 5S rRNA/L5/L18/L25 subcomplex. Contacts the 5S and 23S rRNAs.

Functionally, this is one of the proteins that bind and probably mediate the attachment of the 5S RNA into the large ribosomal subunit, where it forms part of the central protuberance. This is Large ribosomal subunit protein uL18 from Chlorobium phaeobacteroides (strain BS1).